A 194-amino-acid chain; its full sequence is Probable GTP-binding protein EngB (194 aa).

The EngB-type G domain occupies 22 to 194; the sequence is DLPEYALAGR…AWQFIKEGME (173 aa). Residues 30–37, 57–61, 75–78, 142–145, and 174–176 contribute to the GTP site; these read GRSNVGKS, GKTQT, DVPG, TKAD, and FSS. Residues serine 37 and threonine 59 each contribute to the Mg(2+) site.

The protein belongs to the TRAFAC class TrmE-Era-EngA-EngB-Septin-like GTPase superfamily. EngB GTPase family. Mg(2+) is required as a cofactor.

Functionally, necessary for normal cell division and for the maintenance of normal septation. The chain is Probable GTP-binding protein EngB from Listeria monocytogenes serovar 1/2a (strain ATCC BAA-679 / EGD-e).